Reading from the N-terminus, the 764-residue chain is Irregular chiasm C-roughest protein (764 aa).

Positions 1 to 19 (MLHTMQLLLLATIVGMVRS) are cleaved as a signal peptide. The Extracellular portion of the chain corresponds to 20-533 (SPYTSYQNQR…QAKKSVSLLM (514 aa)). Ig-like C2-type domains are found at residues 21 to 120 (PYTS…PAIR), 132 to 230 (PEAP…AKIR), 237 to 343 (PKVK…LDIS), 346 to 419 (PSFR…AEIS), and 430 to 530 (PAIG…KSVS). 5 disulfides stabilise this stretch: C49–C107, C155–C214, C281–C325, C367–C408, and C450–C508. N211, N313, N393, N400, and N507 each carry an N-linked (GlcNAc...) asparagine glycan. Residues 534 to 556 (TIVGGISVVAFLLVLTILVVVYI) traverse the membrane as a helical segment. Over 557–764 (KCKKRTKLPP…SSLLPPPTAV (208 aa)) the chain is Cytoplasmic. Disordered regions lie at residues 640–660 (HQNQLQLQQQQQQSHHQHHTQ) and 691–719 (NGLPSLQSTTASVVSSSPNGSCSNQSTTA). Positions 692–701 (GLPSLQSTTA) are enriched in polar residues. The span at 702–719 (SVVSSSPNGSCSNQSTTA) shows a compositional bias: low complexity.

As to expression, postembryonic expression is strong in the developing optic lobe and in the eye imaginal disk.

The protein resides in the membrane. Functionally, required for correct axonal pathway formation in the optic lobe and for programmed cell death in the developing retina. The protein is Irregular chiasm C-roughest protein (rst) of Drosophila melanogaster (Fruit fly).